A 389-amino-acid chain; its full sequence is BTB/POZ domain-containing protein KCTD9 (389 aa).

Residues 3 to 82 (RVTLFLNGSP…PQTDSKPPEG (80 aa)) enclose the KHA domain. The residue at position 11 (serine 11) is a Phosphoserine. Residues 89 to 161 (DWLTLNVGGR…LRHGQLIVND (73 aa)) form the BTB domain. 3 Pentapeptide repeat domains span residues 224–256 (NFSG…ANLC), 258–297 (ANLE…NFED), and 338–376 (CNLR…AIFE).

Forms pentamers. Component of a complex composed of 5 subunits of KCTD9 and 5 CUL3.

The protein operates within protein modification; protein ubiquitination. In terms of biological role, substrate-specific adapter of a BCR (BTB-CUL3-RBX1) E3 ubiquitin-protein ligase complex, which mediates the ubiquitination of target proteins, leading to their degradation by the proteasome. The polypeptide is BTB/POZ domain-containing protein KCTD9 (KCTD9) (Homo sapiens (Human)).